Consider the following 193-residue polypeptide: 3-isopropylmalate dehydratase small subunit (193 aa).

It belongs to the LeuD family. LeuD type 1 subfamily. Heterodimer of LeuC and LeuD.

It carries out the reaction (2R,3S)-3-isopropylmalate = (2S)-2-isopropylmalate. Its pathway is amino-acid biosynthesis; L-leucine biosynthesis; L-leucine from 3-methyl-2-oxobutanoate: step 2/4. In terms of biological role, catalyzes the isomerization between 2-isopropylmalate and 3-isopropylmalate, via the formation of 2-isopropylmaleate. This is 3-isopropylmalate dehydratase small subunit from Bacillus cytotoxicus (strain DSM 22905 / CIP 110041 / 391-98 / NVH 391-98).